The sequence spans 324 residues: Acetyl-coenzyme A carboxylase carboxyl transferase subunit alpha (324 aa).

The 255-residue stretch at 44 to 298 (QLERRAEELR…KQTLIDTIDE (255 aa)) folds into the CoA carboxyltransferase C-terminal domain.

The protein belongs to the AccA family. As to quaternary structure, acetyl-CoA carboxylase is a heterohexamer composed of biotin carboxyl carrier protein (AccB), biotin carboxylase (AccC) and two subunits each of ACCase subunit alpha (AccA) and ACCase subunit beta (AccD).

The protein localises to the cytoplasm. The enzyme catalyses N(6)-carboxybiotinyl-L-lysyl-[protein] + acetyl-CoA = N(6)-biotinyl-L-lysyl-[protein] + malonyl-CoA. It functions in the pathway lipid metabolism; malonyl-CoA biosynthesis; malonyl-CoA from acetyl-CoA: step 1/1. Component of the acetyl coenzyme A carboxylase (ACC) complex. First, biotin carboxylase catalyzes the carboxylation of biotin on its carrier protein (BCCP) and then the CO(2) group is transferred by the carboxyltransferase to acetyl-CoA to form malonyl-CoA. The chain is Acetyl-coenzyme A carboxylase carboxyl transferase subunit alpha from Rippkaea orientalis (strain PCC 8801 / RF-1) (Cyanothece sp. (strain PCC 8801)).